The chain runs to 511 residues: Movement protein (511 aa).

It is found in the host cell junction. It localises to the host plasmodesma. The protein resides in the host cytoplasm. In terms of biological role, transports viral genome to neighboring plant cells directly through plasmosdesmata, without any budding. The movement protein allows efficient cell to cell propagation, by bypassing the host cell wall barrier. This is Movement protein from Rice gall dwarf virus (RGDV).